A 192-amino-acid polypeptide reads, in one-letter code: Thymidine kinase (192 aa).

Residues 9-16 (GAMNSGKS) and 85-88 (DEVQ) contribute to the ATP site. The Proton acceptor role is filled by Glu86. Cys143, Cys146, Cys181, and Cys184 together coordinate Zn(2+).

This sequence belongs to the thymidine kinase family. Homotetramer.

Its subcellular location is the cytoplasm. The enzyme catalyses thymidine + ATP = dTMP + ADP + H(+). This is Thymidine kinase from Shouchella clausii (strain KSM-K16) (Alkalihalobacillus clausii).